The chain runs to 374 residues: Chaperone protein DnaJ (374 aa).

The region spanning 4–68 (DYYEILGVSR…ETRNRYDRFG (65 aa)) is the J domain. Residues 133–215 (GGEKEIRIRH…CGGSGRRQET (83 aa)) form a CR-type zinc finger. Cys146, Cys149, Cys163, Cys166, Cys189, Cys192, Cys203, and Cys206 together coordinate Zn(2+). 4 CXXCXGXG motif repeats span residues 146–153 (CQTCKGSG), 163–170 (CTTCSGTG), 189–196 (CPTCDGAG), and 203–210 (CDVCGGSG).

This sequence belongs to the DnaJ family. In terms of assembly, homodimer. Zn(2+) is required as a cofactor.

The protein localises to the cytoplasm. Participates actively in the response to hyperosmotic and heat shock by preventing the aggregation of stress-denatured proteins and by disaggregating proteins, also in an autonomous, DnaK-independent fashion. Unfolded proteins bind initially to DnaJ; upon interaction with the DnaJ-bound protein, DnaK hydrolyzes its bound ATP, resulting in the formation of a stable complex. GrpE releases ADP from DnaK; ATP binding to DnaK triggers the release of the substrate protein, thus completing the reaction cycle. Several rounds of ATP-dependent interactions between DnaJ, DnaK and GrpE are required for fully efficient folding. Also involved, together with DnaK and GrpE, in the DNA replication of plasmids through activation of initiation proteins. The polypeptide is Chaperone protein DnaJ (Microcystis aeruginosa (strain NIES-843 / IAM M-2473)).